The following is a 227-amino-acid chain: Cytochrome c oxidase subunit 2 (227 aa).

Residues 1-14 (MAYPFQLGLQDATS) are Mitochondrial intermembrane-facing. A helical membrane pass occupies residues 15-45 (PIMEELLHFHDHTLMIVFLISSLVLYIITLM). The Mitochondrial matrix portion of the chain corresponds to 46-59 (LTTKLTHTSTMDAQ). The chain crosses the membrane as a helical span at residues 60-87 (EVETVWTILPAIILILIALPSLRILYMM). Residues 88–227 (DEINNPSLTV…YFETWSALMV (140 aa)) are Mitochondrial intermembrane-facing. Cu cation-binding residues include H161, C196, E198, C200, H204, and M207. E198 serves as a coordination point for Mg(2+). Residue Y218 is modified to Phosphotyrosine.

It belongs to the cytochrome c oxidase subunit 2 family. In terms of assembly, component of the cytochrome c oxidase (complex IV, CIV), a multisubunit enzyme composed of 14 subunits. The complex is composed of a catalytic core of 3 subunits MT-CO1, MT-CO2 and MT-CO3, encoded in the mitochondrial DNA, and 11 supernumerary subunits COX4I, COX5A, COX5B, COX6A, COX6B, COX6C, COX7A, COX7B, COX7C, COX8 and NDUFA4, which are encoded in the nuclear genome. The complex exists as a monomer or a dimer and forms supercomplexes (SCs) in the inner mitochondrial membrane with NADH-ubiquinone oxidoreductase (complex I, CI) and ubiquinol-cytochrome c oxidoreductase (cytochrome b-c1 complex, complex III, CIII), resulting in different assemblies (supercomplex SCI(1)III(2)IV(1) and megacomplex MCI(2)III(2)IV(2)). Found in a complex with TMEM177, COA6, COX18, COX20, SCO1 and SCO2. Interacts with TMEM177 in a COX20-dependent manner. Interacts with COX20. Interacts with COX16. The cofactor is Cu cation.

The protein localises to the mitochondrion inner membrane. It carries out the reaction 4 Fe(II)-[cytochrome c] + O2 + 8 H(+)(in) = 4 Fe(III)-[cytochrome c] + 2 H2O + 4 H(+)(out). In terms of biological role, component of the cytochrome c oxidase, the last enzyme in the mitochondrial electron transport chain which drives oxidative phosphorylation. The respiratory chain contains 3 multisubunit complexes succinate dehydrogenase (complex II, CII), ubiquinol-cytochrome c oxidoreductase (cytochrome b-c1 complex, complex III, CIII) and cytochrome c oxidase (complex IV, CIV), that cooperate to transfer electrons derived from NADH and succinate to molecular oxygen, creating an electrochemical gradient over the inner membrane that drives transmembrane transport and the ATP synthase. Cytochrome c oxidase is the component of the respiratory chain that catalyzes the reduction of oxygen to water. Electrons originating from reduced cytochrome c in the intermembrane space (IMS) are transferred via the dinuclear copper A center (CU(A)) of subunit 2 and heme A of subunit 1 to the active site in subunit 1, a binuclear center (BNC) formed by heme A3 and copper B (CU(B)). The BNC reduces molecular oxygen to 2 water molecules using 4 electrons from cytochrome c in the IMS and 4 protons from the mitochondrial matrix. The chain is Cytochrome c oxidase subunit 2 (MT-CO2) from Vulpes macrotis (Kit fox).